Here is a 125-residue protein sequence, read N- to C-terminus: Oxytocin-neurophysin 1 (125 aa).

A signal peptide spans 1–19 (MAGPSLACCLLGLLALTSA). The cysteines at positions 20 and 25 are disulfide-linked. Glycine 28 carries the glycine amide modification. 7 disulfides stabilise this stretch: cysteine 41–cysteine 85, cysteine 44–cysteine 58, cysteine 52–cysteine 75, cysteine 59–cysteine 65, cysteine 92–cysteine 104, cysteine 98–cysteine 116, and cysteine 105–cysteine 110.

Belongs to the vasopressin/oxytocin family. In terms of assembly, interacts with oxytocin receptor (Ki=1.5 nM). Interacts with vasopressin V1aR/AVPR1A (Ki=37 nM), V1bR/AVPR1B (Ki=222 nM) and V2R/AVPR2 receptors (Ki=823 nM).

It localises to the secreted. Neurophysin 1 specifically binds oxytocin. In terms of biological role, oxytocin causes contraction of the smooth muscle of the uterus and of the mammary gland. Acts by binding to oxytocin receptor (OXTR). The protein is Oxytocin-neurophysin 1 (OXT) of Homo sapiens (Human).